The primary structure comprises 310 residues: Isoflavone reductase homolog P3 (310 aa).

Residues G12 to G18, R37, and K46 each bind NADP(+). The active-site Proton acceptor is K134. R138 is an NADP(+) binding site.

This sequence belongs to the NmrA-type oxidoreductase family. Isoflavone reductase subfamily.

Its subcellular location is the cytoplasm. The polypeptide is Isoflavone reductase homolog P3 (Arabidopsis thaliana (Mouse-ear cress)).